An 84-amino-acid polypeptide reads, in one-letter code: MKVIDIANRRRIYFEMKQQELRASILMTVAGFIIAFAILVFQISFELGHLYHYIVTFAFLTYLSLHLYSNNKLARKIEKKQQGY.

The chain crosses the membrane as a helical span at residues 25-45; that stretch reads ILMTVAGFIIAFAILVFQISF.

It localises to the membrane. This is an uncharacterized protein from Bacillus anthracis.